Consider the following 443-residue polypeptide: KH domain-containing, RNA-binding, signal transduction-associated protein 1 (443 aa).

Residues 1–95 (MQRRDDPAAR…LLPPSATAAA (95 aa)) form a disordered region. A phosphoserine mark is found at S18 and S20. K21 carries the N6-acetyllysine modification. S29 carries the phosphoserine modification. T33 bears the Phosphothreonine mark. Asymmetric dimethylarginine; by PRMT1 is present on residues R45 and R52. At S58 the chain carries Phosphoserine. A compositionally biased stretch (pro residues) spans 61 to 72 (TQPPPLLPPSNP). Over residues 81–95 (SAPTPLLPPSATAAA) the composition is skewed to low complexity. T84 is subject to Phosphothreonine; by MAPK1. Glycyl lysine isopeptide (Lys-Gly) (interchain with G-Cter in SUMO2) cross-links involve residues K96 and K102. The segment at 100–260 (ENKYLPELMA…VKKFLVPDMM (161 aa)) is involved in homodimerization. Phosphoserine is present on S113. Residue K139 forms a Glycyl lysine isopeptide (Lys-Gly) (interchain with G-Cter in SUMO2) linkage. S150 carries the post-translational modification Phosphoserine. Positions 171-197 (NFVGKILGPQGNTIKRLQEETGAKISV) constitute a KH domain. K175 carries the post-translational modification N6-acetyllysine; alternate. K175 is covalently cross-linked (Glycyl lysine isopeptide (Lys-Gly) (interchain with G-Cter in SUMO2); alternate). T183 carries the post-translational modification Phosphothreonine. The disordered stretch occupies residues 280–317 (PSRGRGVSVRGRGAAPPPPPVPRGRGVGPPRGALVRGT). Residues R282, R284, and R291 each carry the omega-N-methylarginine modification. Low complexity predominate over residues 283-293 (GRGVSVRGRGA). R304 is subject to Asymmetric dimethylarginine; by PRMT1. Residues 307–316 (GPPRGALVRG) are compositionally biased toward low complexity. An omega-N-methylarginine; by PRMT1 mark is found at R310 and R315. R320 is subject to Dimethylated arginine; alternate. Position 320 is an omega-N-methylarginine; by PRMT1; alternate (R320). Omega-N-methylarginine; by PRMT1 is present on R325. The tract at residues 326–345 (GATVTRGVPPPPTVRGAPTP) is disordered. Dimethylated arginine; alternate occurs at positions 331 and 340. Residues R331 and R340 each carry the omega-N-methylarginine; by PRMT1; alternate modification. Residue R331 is modified to Asymmetric dimethylarginine; alternate. The segment at 351-443 (GIQRIPLPPT…AYREHPYGRY (93 aa)) is interaction with HNRNPA1. At Y387 the chain carries Phosphotyrosine. At S390 the chain carries Phosphoserine. Residues 400 to 420 (GHGELQDSYEAYGQDDWNGTR) form an interaction with ZBTB7A region. Positions 411–443 (YGQDDWNGTRPSLKAPPARPVKGAYREHPYGRY) are disordered. K432 is covalently cross-linked (Glycyl lysine isopeptide (Lys-Gly) (interchain with G-Cter in SUMO2)). Basic and acidic residues predominate over residues 434–443 (AYREHPYGRY). Y435, Y440, and Y443 each carry phosphotyrosine; by PTK6.

It belongs to the KHDRBS family. As to quaternary structure, self-associates to form homooligomers when bound to RNA, oligomerization appears to be limited when binding to proteins. Interacts with KHDRBS3/SLIM-2. Forms a trimeric complex in the nucleus consisting of BANP, HDAC6 and KHDRBS1/SAM68; HDAC6 keeps KHDRBS1 in a deacetylated state which inhibits the inclusion of CD44 alternate exons. The complex is disrupted by MAPK1/MAPK3-mediated phosphorylation of BANP which results in BANP export to the cytoplasm. This facilitates acetylation of KHDRBS1 and CD44 variant exon inclusion. Interacts with KHDRBS2/SLIM-1; heterooligomer formation of KHDRBS family proteins may modulate RNA substrate specificity. Interacts with PIK3R1, PLCG1. Interacts with RASA1, GRB2, SRC, CBP, PRMT1, APC, HNRNPA1. Interacts with PTK6 (via SH3 and SH2 domains). Forms a complex with ILF2, ILF3, YLPM1, RBMX, NCOA5 and PPP1CA. Binds WBP4/FBP21 (via WW domains), FNBP4/FBP30 (via WW domains). Interacts (via Arg/Gly-rich-flanked Pro-rich regions) with FYN (via the SH3 domain). Interacts with the non-receptor tyrosine kinase SRMS; the interaction leads to phosphorylation of KHDRBS1. Interacts with ZBTB7A; negatively regulates KHDRBS1 splicing activity toward BCL2L1. In terms of processing, tyrosine phosphorylated by several non-receptor tyrosine kinases including LCK, FYN and JAK3. Also tyrosine phosphorylated by the non-receptor tyrosine kinase SRMS in an EGF-dependent manner. Phosphorylation by PTK6 negatively regulates its RNA binding ability. Phosphorylation by PTK6 at Tyr-440 dictates the nuclear localization of KHDRBS1. Acetylated. Positively correlates with ability to bind RNA. Deacetylated by HDAC6; this regulates alternative splicing by inhibiting the inclusion of CD44 alternate exons. Post-translationally, arginine methylation is required for nuclear localization, Inhibits interaction with Src-like SH3 domains, but not interaction with WW domains of WBP4/FBP21 and FNBP4/FBP30.

It localises to the nucleus. It is found in the cytoplasm. The protein localises to the membrane. Recruited and tyrosine phosphorylated by several receptor systems, for example the T-cell, leptin and insulin receptors. Once phosphorylated, functions as an adapter protein in signal transduction cascades by binding to SH2 and SH3 domain-containing proteins. Role in G2-M progression in the cell cycle. Represses CBP-dependent transcriptional activation apparently by competing with other nuclear factors for binding to CBP. Also acts as a putative regulator of mRNA stability and/or translation rates and mediates mRNA nuclear export. Positively regulates the association of constitutive transport element (CTE)-containing mRNA with large polyribosomes and translation initiation. May not be involved in the nucleocytoplasmic export of unspliced (CTE)-containing RNA species. RNA-binding protein that plays a role in the regulation of alternative splicing and influences mRNA splice site selection and exon inclusion. Binds to RNA containing 5'-[AU]UAA-3' as a bipartite motif spaced by more than 15 nucleotides. Binds poly(A). Can regulate CD44 alternative splicing in a Ras pathway-dependent manner. In cooperation with HNRNPA1 modulates alternative splicing of BCL2L1 by promoting splicing toward isoform Bcl-X(S), and of SMN1. Can regulate alternative splicing of NRXN1 and NRXN3 in the laminin G-like domain 6 containing the evolutionary conserved neurexin alternative spliced segment 4 (AS4) involved in neurexin selective targeting to postsynaptic partners. In a neuronal activity-dependent manner cooperates synergistically with KHDRBS2/SLIM-1 in regulation of NRXN1 exon skipping at AS4. The cooperation with KHDRBS2/SLIM-1 is antagonistic for regulation of NXRN3 alternative splicing at AS4. The polypeptide is KH domain-containing, RNA-binding, signal transduction-associated protein 1 (Rattus norvegicus (Rat)).